We begin with the raw amino-acid sequence, 273 residues long: MLKTSEAAADVLKPVLVFDSGIGGLTVLREARVLMPERGFIYVADDAGFPYGGWEEEALKTRILSLFETLLQDYSPEVCIIACNTAFTLAGADLRARFPDMTFVGTVPAIKPAAERTRSGLVSVLATPGTVKRAYTRDLIQSFATQCHVRLVGSENLARMAESWIRGEPVSDEAVLAEIEPCFIDSDGKRTDIVVLACTHYPFMANVFRRLAPWPVDWLDPAEAIARRARHLVPLPQDAEHPDGFDFAVFTSGKPDFATRRLMQGFGLSVSSN.

Substrate contacts are provided by residues 19 to 20 (DS) and 51 to 52 (YG). Cys-83 acts as the Proton donor/acceptor in catalysis. Residue 84–85 (NT) coordinates substrate. Cys-198 functions as the Proton donor/acceptor in the catalytic mechanism. 199-200 (TH) lines the substrate pocket.

It belongs to the aspartate/glutamate racemases family.

It carries out the reaction L-glutamate = D-glutamate. The protein operates within cell wall biogenesis; peptidoglycan biosynthesis. In terms of biological role, provides the (R)-glutamate required for cell wall biosynthesis. The sequence is that of Glutamate racemase from Agrobacterium fabrum (strain C58 / ATCC 33970) (Agrobacterium tumefaciens (strain C58)).